A 467-amino-acid chain; its full sequence is Proton extrusion protein PxcA (467 aa).

Positions 146-161 are enriched in polar residues; it reads SQVRTTSSQPPENPSL. 2 disordered regions span residues 146 to 167 and 186 to 205; these read SQVR…ALRT and PQLI…KADT. A compositionally biased stretch (basic and acidic residues) spans 191 to 203; it reads QRTEQSKKSRGKA. The next 4 helical transmembrane spans lie at 249 to 269, 352 to 372, 391 to 411, and 427 to 447; these read FILL…ALIV, IFSV…IMVL, IIIL…WEVI, and FIFL…KYWI.

The protein belongs to the CemA family.

The protein localises to the cell inner membrane. Required for H(+) efflux immediately after light irradiation to form a rapid H(+) concentration gradient across the thylakoid membranes. Together with PxcL, contributes to transient H(+) uptake following dark to light transition. In Nostoc sp. (strain PCC 7120 / SAG 25.82 / UTEX 2576), this protein is Proton extrusion protein PxcA.